Reading from the N-terminus, the 397-residue chain is Elongation factor Tu (397 aa).

Residues 10–206 (KPHVNIGTIG…HIDTYIPEPT (197 aa)) form the tr-type G domain. A G1 region spans residues 19 to 26 (GHVDHGKT). Residue 19-26 (GHVDHGKT) participates in GTP binding. Thr26 provides a ligand contact to Mg(2+). The G2 stretch occupies residues 61-65 (GITIS). The tract at residues 82 to 85 (DCPG) is G3. Residues 82–86 (DCPGH) and 137–140 (NKCD) contribute to the GTP site. The segment at 137–140 (NKCD) is G4. The tract at residues 175–177 (SAL) is G5.

The protein belongs to the TRAFAC class translation factor GTPase superfamily. Classic translation factor GTPase family. EF-Tu/EF-1A subfamily. In terms of assembly, monomer.

It localises to the cytoplasm. It carries out the reaction GTP + H2O = GDP + phosphate + H(+). Functionally, GTP hydrolase that promotes the GTP-dependent binding of aminoacyl-tRNA to the A-site of ribosomes during protein biosynthesis. This Alkaliphilus oremlandii (strain OhILAs) (Clostridium oremlandii (strain OhILAs)) protein is Elongation factor Tu.